Here is a 398-residue protein sequence, read N- to C-terminus: Succinate--CoA ligase [ADP-forming] subunit beta (398 aa).

The ATP-grasp domain maps to 9–253 (KEILASYGVR…IREENPIEVE (245 aa)). Residues Lys-50, 57–59 (GRG), Val-106, and Glu-116 each bind ATP. Asn-208 and Asp-222 together coordinate Mg(2+). Substrate-binding positions include Asn-273 and 330-332 (GIV).

Belongs to the succinate/malate CoA ligase beta subunit family. In terms of assembly, heterotetramer of two alpha and two beta subunits. Mg(2+) is required as a cofactor.

The catalysed reaction is succinate + ATP + CoA = succinyl-CoA + ADP + phosphate. The enzyme catalyses GTP + succinate + CoA = succinyl-CoA + GDP + phosphate. Its pathway is carbohydrate metabolism; tricarboxylic acid cycle; succinate from succinyl-CoA (ligase route): step 1/1. Its function is as follows. Succinyl-CoA synthetase functions in the citric acid cycle (TCA), coupling the hydrolysis of succinyl-CoA to the synthesis of either ATP or GTP and thus represents the only step of substrate-level phosphorylation in the TCA. The beta subunit provides nucleotide specificity of the enzyme and binds the substrate succinate, while the binding sites for coenzyme A and phosphate are found in the alpha subunit. The sequence is that of Succinate--CoA ligase [ADP-forming] subunit beta from Flavobacterium psychrophilum (strain ATCC 49511 / DSM 21280 / CIP 103535 / JIP02/86).